The primary structure comprises 500 residues: Protein DETOXIFICATION 29 (500 aa).

A run of 12 helical transmembrane segments spans residues 67-87, 91-111, 132-152, 161-181, 197-217, 227-247, 277-297, 302-322, 349-369, 393-413, 419-439, and 449-469; these read GAIT…AVSV, VVAG…ETLC, VILN…APIL, ISSA…AYAI, VMAV…WFVI, LAVV…VYIF, AVML…AGYL, ISVA…MIAI, LVAV…LLIF, ILAL…VAVG, VVAY…GLLL, and GIWC…TWMI.

The protein belongs to the multi antimicrobial extrusion (MATE) (TC 2.A.66.1) family.

Its subcellular location is the vacuole membrane. This is Protein DETOXIFICATION 29 from Arabidopsis thaliana (Mouse-ear cress).